Reading from the N-terminus, the 575-residue chain is MVTPLTGTHEGVSCDGCAFTAFAGNRYKCLRCSDYDLCFSCFTTKNYGDQQTIADIPIHDESHPMQLILSSVDFDLVYQGDPTRHYDERKIVSFTCPYCNITGLTERQFGTHVLSQHPEAPGYSVICPLCIGNTEMEHIQSKETENLSVHWTEIHLHTMENLFRSTEPITTRPVQRRPMLARRGNRAGVSRTAAQGRPLQDEIGAEMAALLRNMGPDSVEDIRRFTEMMTVPLLPGIRSSQRLMTSTGDRPTVVVESAVTHQDPNVQQVIRPLATIPIYPPTSDESGDETPQPAADSADESEDDNDIQELDDMQPIVEDEALKKDEFWKTLKTRISEEDVDLILETMKSTAKVKEDIDDKMPVWTQRPLKRLANAAQVTTTSDSEGDPGWLPLSFETTPIRSTGCGGYWSDKRFLRPRKMQREQSVASSNAEIMEKAEIALALIRASCLHEPVFTDPTKPDIALKEALQHLRLGEKPAKMMEYQAAEELVNMPERDPITTGEMEVEIPDFTARGYGQIVDGNIPLGVVPEADEAITNSEDEEIVGGETSGDDEDEQEDDENDSQDSSVPEEINID.

The ZZ-type zinc finger occupies 9–73; that stretch reads HEGVSCDGCA…PMQLILSSVD (65 aa). Residues cysteine 14, cysteine 17, cysteine 29, cysteine 32, cysteine 38, cysteine 41, histidine 59, and histidine 63 each coordinate Zn(2+). 2 disordered regions span residues 277–306 and 530–575; these read PIYP…DDND and EADE…INID. Composition is skewed to acidic residues over residues 297–306 and 530–563; these read SADESEDDND and EADE…ENDS.

Belongs to the KCMF1 family.

It is found in the cytoplasm. Its subcellular location is the late endosome. The protein localises to the lysosome. The catalysed reaction is S-ubiquitinyl-[E2 ubiquitin-conjugating enzyme]-L-cysteine + [acceptor protein]-L-lysine = [E2 ubiquitin-conjugating enzyme]-L-cysteine + N(6)-ubiquitinyl-[acceptor protein]-L-lysine.. Its pathway is protein modification; protein ubiquitination. Functionally, E3 ubiquitin-protein ligase which accepts ubiquitin from an E2 ubiquitin-conjugating enzyme and then transfers it to targeted substrates, promoting their degradation by the proteasome. This chain is E3 ubiquitin-protein ligase kcmf-1, found in Caenorhabditis elegans.